Here is a 233-residue protein sequence, read N- to C-terminus: Ion-translocating oxidoreductase complex subunit E (233 aa).

The next 6 membrane-spanning stretches (helical) occupy residues 18-38 (ALVQ…ATNA), 39-59 (LGLG…VSAL), 69-89 (IPIY…LINA), 92-112 (FGLY…CIVI), 128-148 (ALDG…LGAL), and 182-202 (PFLL…LLAG).

It belongs to the NqrDE/RnfAE family. In terms of assembly, the complex is composed of six subunits: RnfA, RnfB, RnfC, RnfD, RnfE and RnfG.

The protein localises to the cell inner membrane. Functionally, part of a membrane-bound complex that couples electron transfer with translocation of ions across the membrane. This Yersinia pseudotuberculosis serotype IB (strain PB1/+) protein is Ion-translocating oxidoreductase complex subunit E.